Consider the following 99-residue polypeptide: Small ribosomal subunit protein bS20 (99 aa).

The protein belongs to the bacterial ribosomal protein bS20 family.

Binds directly to 16S ribosomal RNA. In Cyanothece sp. (strain PCC 7425 / ATCC 29141), this protein is Small ribosomal subunit protein bS20.